Here is a 627-residue protein sequence, read N- to C-terminus: 5-aminolevulinate synthase, non-specific, mitochondrial (627 aa).

A mitochondrion-targeting transit peptide spans 1–58 (MDVIVRRCPFLARVPQAFFQQSKKSLAVYAQRCPFMMELASKPMAPSLARALCSSSSS). 3 residues coordinate substrate: R204, S321, and K340. The pyridoxal 5'-phosphate site is built by S373, H401, and T429. Residue K432 is part of the active site. At K432 the chain carries N6-(pyridoxal phosphate)lysine. Positions 461 and 462 each coordinate pyridoxal 5'-phosphate. Residue T549 participates in substrate binding.

The protein belongs to the class-II pyridoxal-phosphate-dependent aminotransferase family. Homodimer. The cofactor is pyridoxal 5'-phosphate.

It is found in the mitochondrion inner membrane. It carries out the reaction succinyl-CoA + glycine + H(+) = 5-aminolevulinate + CO2 + CoA. It participates in porphyrin-containing compound metabolism; protoporphyrin-IX biosynthesis; 5-aminolevulinate from glycine: step 1/1. In terms of biological role, catalyzes the pyridoxal 5'-phosphate (PLP)-dependent condensation of succinyl-CoA and glycine to form aminolevulinic acid (ALA), with CoA and CO2 as by-products. The polypeptide is 5-aminolevulinate synthase, non-specific, mitochondrial (alas1) (Opsanus tau (Oyster toadfish)).